Consider the following 196-residue polypeptide: Pyridoxal 5'-phosphate synthase subunit PdxT (196 aa).

Position 46-48 (46-48) interacts with L-glutamine; that stretch reads GES. C78 acts as the Nucleophile in catalysis. Residues R110 and 138–139 contribute to the L-glutamine site; that span reads IR. Active-site charge relay system residues include H174 and E176.

It belongs to the glutaminase PdxT/SNO family. In the presence of PdxS, forms a dodecamer of heterodimers. Only shows activity in the heterodimer.

The catalysed reaction is aldehydo-D-ribose 5-phosphate + D-glyceraldehyde 3-phosphate + L-glutamine = pyridoxal 5'-phosphate + L-glutamate + phosphate + 3 H2O + H(+). It carries out the reaction L-glutamine + H2O = L-glutamate + NH4(+). The protein operates within cofactor biosynthesis; pyridoxal 5'-phosphate biosynthesis. Functionally, catalyzes the hydrolysis of glutamine to glutamate and ammonia as part of the biosynthesis of pyridoxal 5'-phosphate. The resulting ammonia molecule is channeled to the active site of PdxS. In Deinococcus radiodurans (strain ATCC 13939 / DSM 20539 / JCM 16871 / CCUG 27074 / LMG 4051 / NBRC 15346 / NCIMB 9279 / VKM B-1422 / R1), this protein is Pyridoxal 5'-phosphate synthase subunit PdxT.